The primary structure comprises 954 residues: Glycine dehydrogenase (decarboxylating) (954 aa).

Lys-701 is subject to N6-(pyridoxal phosphate)lysine.

Belongs to the GcvP family. As to quaternary structure, the glycine cleavage system is composed of four proteins: P, T, L and H. Pyridoxal 5'-phosphate is required as a cofactor.

The catalysed reaction is N(6)-[(R)-lipoyl]-L-lysyl-[glycine-cleavage complex H protein] + glycine + H(+) = N(6)-[(R)-S(8)-aminomethyldihydrolipoyl]-L-lysyl-[glycine-cleavage complex H protein] + CO2. Functionally, the glycine cleavage system catalyzes the degradation of glycine. The P protein binds the alpha-amino group of glycine through its pyridoxal phosphate cofactor; CO(2) is released and the remaining methylamine moiety is then transferred to the lipoamide cofactor of the H protein. In Bordetella pertussis (strain Tohama I / ATCC BAA-589 / NCTC 13251), this protein is Glycine dehydrogenase (decarboxylating).